The chain runs to 335 residues: Glycerol-3-phosphate dehydrogenase [NAD(P)+] (335 aa).

3 residues coordinate NADPH: Ser-12, Trp-13, and Lys-107. 3 residues coordinate sn-glycerol 3-phosphate: Lys-107, Gly-138, and Ser-140. Ala-142 lines the NADPH pocket. Sn-glycerol 3-phosphate-binding residues include Lys-193, Asp-246, Ser-256, Arg-257, and Asn-258. The active-site Proton acceptor is the Lys-193. NADPH is bound at residue Arg-257. Residues Val-281 and Glu-283 each contribute to the NADPH site.

The protein belongs to the NAD-dependent glycerol-3-phosphate dehydrogenase family.

Its subcellular location is the cytoplasm. It carries out the reaction sn-glycerol 3-phosphate + NAD(+) = dihydroxyacetone phosphate + NADH + H(+). The enzyme catalyses sn-glycerol 3-phosphate + NADP(+) = dihydroxyacetone phosphate + NADPH + H(+). Its pathway is membrane lipid metabolism; glycerophospholipid metabolism. Functionally, catalyzes the reduction of the glycolytic intermediate dihydroxyacetone phosphate (DHAP) to sn-glycerol 3-phosphate (G3P), the key precursor for phospholipid synthesis. The polypeptide is Glycerol-3-phosphate dehydrogenase [NAD(P)+] (Citrifermentans bemidjiense (strain ATCC BAA-1014 / DSM 16622 / JCM 12645 / Bem) (Geobacter bemidjiensis)).